Here is a 135-residue protein sequence, read N- to C-terminus: Galectin-1 (135 aa).

Ala2 is subject to N-acetylalanine. A Galectin domain is found at 4-135 (GLVASNLNLK…DFKIKCVAFE (132 aa)). Lys13 and Lys29 each carry N6-acetyllysine. The residue at position 30 (Ser30) is a Phosphoserine. Residues 45–49 (HFNPR), His53, Asn62, and 69–72 (WGAE) each bind a beta-D-galactoside. At Lys108 the chain carries N6-acetyllysine; alternate. Lys108 is subject to N6-succinyllysine; alternate. Position 128 is an N6-acetyllysine (Lys128).

In terms of assembly, homodimer. Binds LGALS3BP. Interacts with CD2, CD3, CD4, CD6, CD7, CD43, ALCAM and CD45. Interacts with laminin (via poly-N-acetyllactosamine). Interacts with SUSD2. Interacts with cargo receptor TMED10; the interaction mediates the translocation from the cytoplasm into the ERGIC (endoplasmic reticulum-Golgi intermediate compartment) and thereby secretion.

Its subcellular location is the secreted. The protein resides in the extracellular space. The protein localises to the extracellular matrix. It localises to the cytoplasm. Lectin that binds beta-galactoside and a wide array of complex carbohydrates. Plays a role in regulating apoptosis, cell proliferation and cell differentiation. Inhibits CD45 protein phosphatase activity and therefore the dephosphorylation of Lyn kinase. Strong inducer of T-cell apoptosis. This chain is Galectin-1 (LGALS1), found in Bos taurus (Bovine).